We begin with the raw amino-acid sequence, 133 residues long: ATP synthase epsilon chain, chloroplastic (133 aa).

This sequence belongs to the ATPase epsilon chain family. F-type ATPases have 2 components, CF(1) - the catalytic core - and CF(0) - the membrane proton channel. CF(1) has five subunits: alpha(3), beta(3), gamma(1), delta(1), epsilon(1). CF(0) has three main subunits: a, b and c.

It localises to the plastid. The protein localises to the chloroplast thylakoid membrane. Functionally, produces ATP from ADP in the presence of a proton gradient across the membrane. The protein is ATP synthase epsilon chain, chloroplastic of Ipomoea batatas (Sweet potato).